We begin with the raw amino-acid sequence, 172 residues long: Type II secretion system protein H (172 aa).

A propeptide spans 1 to 6 (MRASRG) (leader sequence). F7 carries the N-methylphenylalanine modification. Residues 7 to 27 (FTLIELMVVMVIISVLIGLAV) form a helical membrane-spanning segment.

It belongs to the GSP H family. Type II secretion is composed of four main components: the outer membrane complex, the inner membrane complex, the cytoplasmic secretion ATPase and the periplasm-spanning pseudopilus. Forms the tip of the type II pseudopilus by interacting with XcpV, XcpW and XcpX. Interacts with core component XcpT. In terms of processing, cleaved by prepilin peptidase. Methylated by prepilin peptidase at the amino group of the N-terminal phenylalanine once the leader sequence is cleaved by prepilin peptidase.

It localises to the cell inner membrane. Component of the type II secretion system required for the energy-dependent secretion of extracellular factors such as proteases and toxins from the periplasm. Part of the pseudopilus tip complex that is critical for the recognition and binding of secretion substrates. Type II pseudopilus confers increased bacterial adhesive capabilities. The protein is Type II secretion system protein H (xcpU) of Pseudomonas aeruginosa (strain ATCC 15692 / DSM 22644 / CIP 104116 / JCM 14847 / LMG 12228 / 1C / PRS 101 / PAO1).